The following is a 275-amino-acid chain: Lectin (275 aa).

The first 30 residues, 1–30 (MASLQTQMISFYLIFLSILLTTIFFFKVNS), serve as a signal peptide directing secretion. Residues Asp111 and Gly129 each coordinate D-glucose. Mn(2+) is bound by residues Glu149 and Asp151. Asp151, Phe153, Asn155, and Asp159 together coordinate Ca(2+). Mn(2+) is bound by residues Asp159 and His166. The propeptide occupies 211–217 (NSLEEEN). 2 residues coordinate D-glucose: Gly246 and Ala247. A propeptide spanning residues 270–275 (KQAADA) is cleaved from the precursor.

The protein belongs to the leguminous lectin family. As to quaternary structure, heterotetramer of two alpha and two beta chains. In terms of processing, the mature form consists of two chains, alpha and beta, produced by cleavage of the immature protein. These remain cleaved, yet fold together to form one subunit.

D-mannose specific lectin. This Lens culinaris subsp. culinaris (Cultivated lentil) protein is Lectin.